Reading from the N-terminus, the 189-residue chain is HGPRTase-like protein (189 aa).

The protein belongs to the purine/pyrimidine phosphoribosyltransferase family. Archaeal HPRT subfamily.

Functionally, may catalyze a purine salvage reaction, the substrate is unknown. This chain is HGPRTase-like protein, found in Natronomonas pharaonis (strain ATCC 35678 / DSM 2160 / CIP 103997 / JCM 8858 / NBRC 14720 / NCIMB 2260 / Gabara) (Halobacterium pharaonis).